Here is a 482-residue protein sequence, read N- to C-terminus: Protein DETOXIFICATION 9 (482 aa).

A run of 12 helical transmembrane segments spans residues 32 to 49 (VASM…QYLL), 64 to 84 (ALAG…GVLF), 111 to 131 (FTSI…WMFM), 144 to 164 (IAEL…GYSV), 180 to 200 (PMVL…WLMV), 209 to 229 (GAAA…WVYM), 261 to 281 (AMMC…SGLL), 289 to 309 (SVIS…NGIG), 332 to 352 (AAAA…SLFL), 374 to 394 (ITPI…LSGI), 403 to 423 (IGAY…GLLL), and 435 to 455 (WAGL…VIGF).

Belongs to the multi antimicrobial extrusion (MATE) (TC 2.A.66.1) family.

The protein resides in the membrane. In Arabidopsis thaliana (Mouse-ear cress), this protein is Protein DETOXIFICATION 9.